Here is a 289-residue protein sequence, read N- to C-terminus: Ribosomal RNA small subunit methyltransferase A (289 aa).

S-adenosyl-L-methionine-binding residues include N33, V35, G60, E81, D111, and N130.

It belongs to the class I-like SAM-binding methyltransferase superfamily. rRNA adenine N(6)-methyltransferase family. RsmA subfamily.

Its subcellular location is the cytoplasm. It carries out the reaction adenosine(1518)/adenosine(1519) in 16S rRNA + 4 S-adenosyl-L-methionine = N(6)-dimethyladenosine(1518)/N(6)-dimethyladenosine(1519) in 16S rRNA + 4 S-adenosyl-L-homocysteine + 4 H(+). Specifically dimethylates two adjacent adenosines (A1518 and A1519) in the loop of a conserved hairpin near the 3'-end of 16S rRNA in the 30S particle. May play a critical role in biogenesis of 30S subunits. The chain is Ribosomal RNA small subunit methyltransferase A from Corynebacterium efficiens (strain DSM 44549 / YS-314 / AJ 12310 / JCM 11189 / NBRC 100395).